The sequence spans 469 residues: Glutamate--tRNA ligase 2 (469 aa).

The 'HIGH' region signature appears at 10–20 (PSPTGYLHIGG). Zn(2+) contacts are provided by C99, C101, C126, and D128. The short motif at 237 to 241 (RLSKR) is the 'KMSKS' region element. Residue K240 coordinates ATP.

Belongs to the class-I aminoacyl-tRNA synthetase family. Glutamate--tRNA ligase type 1 subfamily. As to quaternary structure, monomer. It depends on Zn(2+) as a cofactor.

The protein resides in the cytoplasm. The catalysed reaction is tRNA(Glu) + L-glutamate + ATP = L-glutamyl-tRNA(Glu) + AMP + diphosphate. Catalyzes the attachment of glutamate to tRNA(Glu) in a two-step reaction: glutamate is first activated by ATP to form Glu-AMP and then transferred to the acceptor end of tRNA(Glu). The polypeptide is Glutamate--tRNA ligase 2 (Coxiella burnetii (strain CbuG_Q212) (Coxiella burnetii (strain Q212))).